The following is a 545-amino-acid chain: Methionine--tRNA ligase (545 aa).

The short motif at 10 to 20 (PYANGSLHIGH) is the 'HIGH' region element. Zn(2+)-binding residues include C141, C144, C153, and C156. The 'KMSKS' region motif lies at 329–333 (KISTS). T332 lines the ATP pocket.

This sequence belongs to the class-I aminoacyl-tRNA synthetase family. MetG type 1 subfamily. As to quaternary structure, monomer. Zn(2+) is required as a cofactor.

It localises to the cytoplasm. The catalysed reaction is tRNA(Met) + L-methionine + ATP = L-methionyl-tRNA(Met) + AMP + diphosphate. Its function is as follows. Is required not only for elongation of protein synthesis but also for the initiation of all mRNA translation through initiator tRNA(fMet) aminoacylation. This is Methionine--tRNA ligase from Streptococcus pneumoniae (strain 70585).